A 351-amino-acid chain; its full sequence is Dihydroorotate dehydrogenase (quinone) (351 aa).

FMN is bound by residues 61-65 (AGLDK) and Thr-85. A substrate-binding site is contributed by Lys-65. Residue 110 to 114 (NRMGF) participates in substrate binding. The FMN site is built by Asn-139 and Asn-172. Asn-172 is a binding site for substrate. The active-site Nucleophile is Ser-175. Asn-177 serves as a coordination point for substrate. 2 residues coordinate FMN: Lys-217 and Thr-245. 246–247 (NT) serves as a coordination point for substrate. FMN contacts are provided by residues Gly-268, Gly-297, and 318 to 319 (YS).

The protein belongs to the dihydroorotate dehydrogenase family. Type 2 subfamily. Monomer. Requires FMN as cofactor.

The protein resides in the cell membrane. It carries out the reaction (S)-dihydroorotate + a quinone = orotate + a quinol. Its pathway is pyrimidine metabolism; UMP biosynthesis via de novo pathway; orotate from (S)-dihydroorotate (quinone route): step 1/1. In terms of biological role, catalyzes the conversion of dihydroorotate to orotate with quinone as electron acceptor. The polypeptide is Dihydroorotate dehydrogenase (quinone) (Xanthomonas euvesicatoria pv. vesicatoria (strain 85-10) (Xanthomonas campestris pv. vesicatoria)).